Here is a 183-residue protein sequence, read N- to C-terminus: Peptidyl-tRNA hydrolase (183 aa).

Tyr14 contacts tRNA. Residue His19 is the Proton acceptor of the active site. TRNA contacts are provided by Tyr64, Asn66, and Asn112.

The protein belongs to the PTH family. Monomer.

It localises to the cytoplasm. The catalysed reaction is an N-acyl-L-alpha-aminoacyl-tRNA + H2O = an N-acyl-L-amino acid + a tRNA + H(+). In terms of biological role, hydrolyzes ribosome-free peptidyl-tRNAs (with 1 or more amino acids incorporated), which drop off the ribosome during protein synthesis, or as a result of ribosome stalling. Its function is as follows. Catalyzes the release of premature peptidyl moieties from peptidyl-tRNA molecules trapped in stalled 50S ribosomal subunits, and thus maintains levels of free tRNAs and 50S ribosomes. The protein is Peptidyl-tRNA hydrolase of Anaplasma phagocytophilum (strain HZ).